We begin with the raw amino-acid sequence, 601 residues long: Glutathione-regulated potassium-efflux system protein KefB (601 aa).

The next 13 helical transmembrane spans lie at 4-24 (ADLL…VPLA), 29-49 (IGAV…GLGF), 55-75 (EILH…GLEL), 87-107 (IFGV…GLLM), 111-131 (FLWQ…TAMA), 152-172 (VLLF…LLAG), 177-197 (HFDW…LIGG), 207-227 (FIAA…LVLS), 230-250 (LFMD…GVLL), 262-282 (AIDP…GMSL), 284-304 (LGVL…LVAI), 324-344 (MQFA…FSTA), and 356-376 (ALLL…MKGI). Residues 400–519 (KPQVIVVGFG…AGVTQFSRET (120 aa)) enclose the RCK N-terminal domain.

It belongs to the monovalent cation:proton antiporter 2 (CPA2) transporter (TC 2.A.37) family. KefB subfamily. As to quaternary structure, interacts with the regulatory subunit KefG.

The protein resides in the cell inner membrane. In terms of biological role, pore-forming subunit of a potassium efflux system that confers protection against electrophiles. Catalyzes K(+)/H(+) antiport. In Salmonella schwarzengrund (strain CVM19633), this protein is Glutathione-regulated potassium-efflux system protein KefB.